The following is a 345-amino-acid chain: Platelet-derived growth factor C (345 aa).

The first 22 residues, 1 to 22 (MLLLGLLLLTSALAGQRTGTRA), serve as a signal peptide directing secretion. Residues 24–33 (SNLSSKLQLS) show a composition bias toward polar residues. The interval 24 to 45 (SNLSSKLQLSSDKEQNGVQDPR) is disordered. The N-linked (GlcNAc...) asparagine glycan is linked to Asn-25. Residues 34 to 45 (SDKEQNGVQDPR) show a composition bias toward basic and acidic residues. The CUB domain occupies 46–163 (HERVVTISGN…PGFCIHYSII (118 aa)). Residue Asn-55 is glycosylated (N-linked (GlcNAc...) asparagine). 4 disulfides stabilise this stretch: Cys-104–Cys-124, Cys-250–Cys-294, Cys-280–Cys-335, and Cys-287–Cys-337.

Belongs to the PDGF/VEGF growth factor family. In terms of assembly, homodimer; disulfide-linked. Interacts with PDGFRA homodimers, and with heterodimers formed by PDGFRA and PDGFRB. Interacts (via CUB domain) with PLAT (via kringle domain). Post-translationally, proteolytic removal of the N-terminal CUB domain releasing the core domain is necessary for unmasking the receptor-binding epitopes of the core domain. Cleavage after basic residues in the hinge region (region connecting the CUB and growth factor domains) gives rise to the receptor-binding form. Cleaved by PLAT and PLG. In terms of processing, sumoylated by SUMO1. N-glycosylated. Mainly expressed in kidney, testis, liver, heart and brain (at protein level). Highly expressed in airway epithelium, interstitial cells and alveolar macrophages in the lung of mice overexpressing IL13. Expressed in the ovaries.

It localises to the cytoplasm. It is found in the cytosol. The protein localises to the secreted. Its subcellular location is the nucleus. The protein resides in the cytoplasmic granule. It localises to the cell membrane. Its function is as follows. Growth factor that plays an essential role in the regulation of embryonic development, cell proliferation, cell migration, survival and chemotaxis. Potent mitogen and chemoattractant for cells of mesenchymal origin. Required for normal skeleton formation during embryonic development, especially for normal development of the craniofacial skeleton and for normal development of the palate. Required for normal skin morphogenesis during embryonic development. Plays an important role in wound healing, where it appears to be involved in three stages: inflammation, proliferation and remodeling. Plays an important role in angiogenesis and blood vessel development. Involved in fibrotic processes, in which transformation of interstitial fibroblasts into myofibroblasts plus collagen deposition occurs. The CUB domain has mitogenic activity in coronary artery smooth muscle cells, suggesting a role beyond the maintenance of the latency of the PDGF domain. In the nucleus, PDGFC seems to have additional function. The sequence is that of Platelet-derived growth factor C (Pdgfc) from Mus musculus (Mouse).